Reading from the N-terminus, the 459-residue chain is UDP-N-acetylmuramoylalanine--D-glutamate ligase (459 aa).

Residue 120–126 (GSNGKTT) coordinates ATP.

Belongs to the MurCDEF family.

It localises to the cytoplasm. It carries out the reaction UDP-N-acetyl-alpha-D-muramoyl-L-alanine + D-glutamate + ATP = UDP-N-acetyl-alpha-D-muramoyl-L-alanyl-D-glutamate + ADP + phosphate + H(+). It participates in cell wall biogenesis; peptidoglycan biosynthesis. Its function is as follows. Cell wall formation. Catalyzes the addition of glutamate to the nucleotide precursor UDP-N-acetylmuramoyl-L-alanine (UMA). The polypeptide is UDP-N-acetylmuramoylalanine--D-glutamate ligase (Lactobacillus helveticus (strain DPC 4571)).